The following is a 402-amino-acid chain: S-adenosylmethionine synthase (402 aa).

Residue histidine 15 participates in ATP binding. A Mg(2+)-binding site is contributed by aspartate 17. A K(+)-binding site is contributed by glutamate 43. Glutamate 56 and glutamine 99 together coordinate L-methionine. Positions 99-109 are flexible loop; that stretch reads QSPDIAQGVDT. ATP-binding positions include 174–176, 247–248, aspartate 256, 262–263, alanine 279, and lysine 283; these read DGK, RF, and RK. Aspartate 256 contacts L-methionine. An L-methionine-binding site is contributed by lysine 287.

It belongs to the AdoMet synthase family. In terms of assembly, homotetramer; dimer of dimers. Requires Mg(2+) as cofactor. The cofactor is K(+).

The protein resides in the cytoplasm. The enzyme catalyses L-methionine + ATP + H2O = S-adenosyl-L-methionine + phosphate + diphosphate. The protein operates within amino-acid biosynthesis; S-adenosyl-L-methionine biosynthesis; S-adenosyl-L-methionine from L-methionine: step 1/1. Functionally, catalyzes the formation of S-adenosylmethionine (AdoMet) from methionine and ATP. The overall synthetic reaction is composed of two sequential steps, AdoMet formation and the subsequent tripolyphosphate hydrolysis which occurs prior to release of AdoMet from the enzyme. In Streptomyces griseus subsp. griseus (strain JCM 4626 / CBS 651.72 / NBRC 13350 / KCC S-0626 / ISP 5235), this protein is S-adenosylmethionine synthase.